The following is a 152-amino-acid chain: Large ribosomal subunit protein bL9 (152 aa).

This sequence belongs to the bacterial ribosomal protein bL9 family.

In terms of biological role, binds to the 23S rRNA. This Thermosynechococcus vestitus (strain NIES-2133 / IAM M-273 / BP-1) protein is Large ribosomal subunit protein bL9.